A 104-amino-acid polypeptide reads, in one-letter code: Co-chaperonin GroES 5 (104 aa).

It belongs to the GroES chaperonin family. In terms of assembly, heptamer of 7 subunits arranged in a ring. Interacts with the chaperonin GroEL.

The protein resides in the cytoplasm. Functionally, together with the chaperonin GroEL, plays an essential role in assisting protein folding. The GroEL-GroES system forms a nano-cage that allows encapsulation of the non-native substrate proteins and provides a physical environment optimized to promote and accelerate protein folding. GroES binds to the apical surface of the GroEL ring, thereby capping the opening of the GroEL channel. The polypeptide is Co-chaperonin GroES 5 (Rhizobium meliloti (strain 1021) (Ensifer meliloti)).